A 357-amino-acid chain; its full sequence is Membrane-bound lytic murein transglycosylase C (357 aa).

The N-terminal stretch at 1-15 is a signal peptide; that stretch reads MKKYLLLALLPFLYA. Cys-16 carries N-palmitoyl cysteine lipidation. A lipid anchor (S-diacylglycerol cysteine) is attached at Cys-16.

Belongs to the transglycosylase Slt family.

The protein resides in the cell outer membrane. It carries out the reaction Exolytic cleavage of the (1-&gt;4)-beta-glycosidic linkage between N-acetylmuramic acid (MurNAc) and N-acetylglucosamine (GlcNAc) residues in peptidoglycan, from either the reducing or the non-reducing ends of the peptidoglycan chains, with concomitant formation of a 1,6-anhydrobond in the MurNAc residue.. Its function is as follows. Murein-degrading enzyme. May play a role in recycling of muropeptides during cell elongation and/or cell division. This chain is Membrane-bound lytic murein transglycosylase C, found in Haemophilus influenzae (strain ATCC 51907 / DSM 11121 / KW20 / Rd).